The sequence spans 593 residues: Transmembrane 9 superfamily member 4 (593 aa).

An N-terminal signal peptide occupies residues 1 to 25; it reads MVLLPSMTSLLLVFLFLYGVSPVIS. The Lumenal portion of the chain corresponds to 26-230; sequence DGSDHRYKVG…SMPHHLEIHW (205 aa). A helical membrane pass occupies residues 231–251; the sequence is FSIINSCVTVLLLTGFLATIL. Over 252-303 the chain is Cytoplasmic; the sequence is MRVLKNDFVKYAHDEEAVDDQEETGWKLIHGDVFRFPKHKSLLAAALGSGTQ. The chain crosses the membrane as a helical span at residues 304-324; it reads LFTLAVFIFMLALVGVFYPYN. Topologically, residues 325–326 are lumenal; it reads RG. A helical membrane pass occupies residues 327-347; sequence ALFTALVVIYALTSGIAGYTA. Topologically, residues 348–366 are cytoplasmic; it reads ASFYCQLEGTNWVRNVILT. Residues 367–387 form a helical membrane-spanning segment; that stretch reads GSLFCGPLLITFSFLNTVAIA. Residues 388-398 lie on the Lumenal side of the membrane; that stretch reads YQATAALPFGT. The chain crosses the membrane as a helical span at residues 399–419; it reads IVVIFLIWALVTSPLLILGGI. Topologically, residues 420-453 are cytoplasmic; the sequence is AGKNRKSEFQAPCRTTKYPREIPPMRWYRRTLPQ. Residues 454–474 traverse the membrane as a helical segment; sequence MAMAGFLPFSAIYIELYYIFA. Over 475-486 the chain is Lumenal; the sequence is SVWGHRIYTIYS. The helical transmembrane segment at 487–507 threads the bilayer; sequence ILSIVFLILVIVTAFITVALT. The Cytoplasmic segment spans residues 508–522; sequence YFQLAAEDHEWWWRS. Residues 523-543 traverse the membrane as a helical segment; sequence LLCGGSTGLFIYAYCLYYYYA. Residues 544–554 are Lumenal-facing; that stretch reads RSDMSGFMQTS. Residues 555 to 575 form a helical membrane-spanning segment; that stretch reads FFFGYMACICYGFFLMLGTIG. The Cytoplasmic portion of the chain corresponds to 576–593; that stretch reads FCASLLFVRHIYRSIKCE. Residues 582–587 carry the Endoplasmic reticulum export signal motif; the sequence is FVRHIY. The short motif at 591–593 is the Golgi retention signal element; the sequence is KCE.

Belongs to the nonaspanin (TM9SF) (TC 9.A.2) family.

The protein resides in the endosome membrane. It localises to the golgi apparatus membrane. The chain is Transmembrane 9 superfamily member 4 from Arabidopsis thaliana (Mouse-ear cress).